A 374-amino-acid chain; its full sequence is Phenoloxidase-activating enzyme 1 (374 aa).

Residues methionine 1 to serine 19 form the signal peptide. Residues glutamine 20–arginine 120 constitute a propeptide, activation peptide. Positions aspartate 21–cysteine 74 constitute a Clip domain. Cystine bridges form between cysteine 22-cysteine 73, cysteine 32-cysteine 63, and cysteine 38-cysteine 74. Residues alanine 83 to serine 97 are compositionally biased toward polar residues. The tract at residues alanine 83 to isoleucine 114 is disordered. A Peptidase S1 domain is found at valine 121–alanine 370. A disulfide bridge links cysteine 151 with cysteine 167. Histidine 166 serves as the catalytic Charge relay system. Ca(2+)-binding residues include glutamate 186 and aspartate 194. Aspartate 228 serves as the catalytic Charge relay system. 2 cysteine pairs are disulfide-bonded: cysteine 292–cysteine 307 and cysteine 317–cysteine 346. Residue serine 321 is the Charge relay system of the active site.

This sequence belongs to the peptidase S1 family. CLIP subfamily. Post-translationally, activated by the removal of the N-terminal inhibitory propeptide. In terms of tissue distribution, expressed in hemocytes.

The protein localises to the secreted. With respect to regulation, inhibited by aprotenin. Not inhibited by EDTA, PMSF or leupeptin. Its function is as follows. Serine protease which, by cleaving and activating prophenoloxidase (PPO1) after immune challenge, plays an essential role in the melanization immune response to wounding. This Spodoptera litura (Asian cotton leafworm) protein is Phenoloxidase-activating enzyme 1.